Here is a 100-residue protein sequence, read N- to C-terminus: Aspartyl/glutamyl-tRNA(Asn/Gln) amidotransferase subunit C (100 aa).

It belongs to the GatC family. Heterotrimer of A, B and C subunits.

It carries out the reaction L-glutamyl-tRNA(Gln) + L-glutamine + ATP + H2O = L-glutaminyl-tRNA(Gln) + L-glutamate + ADP + phosphate + H(+). It catalyses the reaction L-aspartyl-tRNA(Asn) + L-glutamine + ATP + H2O = L-asparaginyl-tRNA(Asn) + L-glutamate + ADP + phosphate + 2 H(+). In terms of biological role, allows the formation of correctly charged Asn-tRNA(Asn) or Gln-tRNA(Gln) through the transamidation of misacylated Asp-tRNA(Asn) or Glu-tRNA(Gln) in organisms which lack either or both of asparaginyl-tRNA or glutaminyl-tRNA synthetases. The reaction takes place in the presence of glutamine and ATP through an activated phospho-Asp-tRNA(Asn) or phospho-Glu-tRNA(Gln). The chain is Aspartyl/glutamyl-tRNA(Asn/Gln) amidotransferase subunit C from Petrotoga mobilis (strain DSM 10674 / SJ95).